A 457-amino-acid polypeptide reads, in one-letter code: Multidrug resistance protein MdtK (457 aa).

The Cytoplasmic portion of the chain corresponds to 1–10; it reads MQKYISEARL. A helical membrane pass occupies residues 11 to 31; the sequence is LLALAIPVILAQIAQTAMGFV. The Extracellular segment spans residues 32–52; it reads DTVMAGGYSATDMAAVAIGTS. A helical membrane pass occupies residues 53 to 73; it reads IWLPAILFGHGLLLALTPVIA. Residues 74-92 are Cytoplasmic-facing; sequence QLNGSGRRERIAHQVRQGF. Residues 93-113 traverse the membrane as a helical segment; the sequence is WLAGFVSVLIMLVLWNAGYII. At 114 to 126 the chain is on the extracellular side; sequence RSMENIDPALADK. The chain crosses the membrane as a helical span at residues 127-147; sequence AVGYLRALLWGAPGYLFFQVA. Residues 148–159 lie on the Cytoplasmic side of the membrane; the sequence is RNQCEGLAKTKP. A helical transmembrane segment spans residues 160–180; it reads GMVMGFIGLLVNIPVNYIFIY. At 181–188 the chain is on the extracellular side; the sequence is GHFGMPEL. Residues 189–209 form a helical membrane-spanning segment; it reads GGVGCGVATAAVYWVMFLAMV. At 210–242 the chain is on the cytoplasmic side; it reads SYIKRARSMRDIRNEKGTAKPDPAVMKRLIQLG. The helical transmembrane segment at 243–263 threads the bilayer; the sequence is LPIALALFFEVTLFAVVALLV. Topologically, residues 264 to 275 are extracellular; that stretch reads SPLGIVDVAGHQ. The helical transmembrane segment at 276-296 threads the bilayer; it reads IALNFSSLMFVLPMSLAAAVT. Over 297 to 313 the chain is Cytoplasmic; sequence IRVGYRLGQGSTLDAQT. Residues 314 to 334 form a helical membrane-spanning segment; that stretch reads AARTGLMVGVCMATLTAIFTV. Topologically, residues 335 to 349 are extracellular; sequence SLREQIALLYNDNPE. Residues 350–370 form a helical membrane-spanning segment; the sequence is VVTLAAHLMLLAAVYQISDSI. Residues 371-386 are Cytoplasmic-facing; it reads QVIGSGILRGYKDTRS. The chain crosses the membrane as a helical span at residues 387–407; that stretch reads IFYITFTAYWVLGLPSGYILA. Topologically, residues 408 to 417 are extracellular; that stretch reads LTDLVVEPMG. A helical membrane pass occupies residues 418-438; that stretch reads PAGFWIGFIIGLTSAAIMMML. The Cytoplasmic segment spans residues 439 to 457; it reads RMRYLQRLPSAIILQRASR.

This sequence belongs to the multi antimicrobial extrusion (MATE) (TC 2.A.66.1) family. MdtK subfamily.

Its subcellular location is the cell inner membrane. Its function is as follows. Multidrug efflux pump that functions probably as a Na(+)/drug antiporter. The chain is Multidrug resistance protein MdtK (mdtK) from Escherichia coli O157:H7.